The following is a 3125-amino-acid chain: Genome polyprotein (3125 aa).

In terms of domain architecture, Peptidase S30 spans 165–308 (RMSEASLQLF…KKQSNEIIHY (144 aa)). Residues H216, D225, and S259 each act as for P1 proteinase activity in the active site. Residues 360–363 (KITC) carry the Involved in interaction with stylet and aphid transmission motif. Residues 618 to 620 (PTK) carry the Involved in virions binding and aphid transmission motif. The Peptidase C6 domain maps to 644–766 (MFIAKAGYCY…DSNMKTYLVG (123 aa)). Catalysis depends on for helper component proteinase activity residues C652 and H725. The 153-residue stretch at 1240 to 1392 (EVMHGSHQDI…TQKEVKVIVE (153 aa)) folds into the Helicase ATP-binding domain. 1253–1260 (GAVGSGKS) contacts ATP. A DECH box motif is present at residues 1342–1345 (DECH). The region spanning 1411 to 1570 (DILKHGVNVL…GLPVMTNGVS (160 aa)) is the Helicase C-terminal domain. Positions 1897–1904 (KKGKSKGK) match the Nuclear localization signal motif. An O-(5'-phospho-RNA)-tyrosine modification is found at Y1919. Residues 2050–2268 (SKSLFRGLRD…VCWGSLQLKR (219 aa)) enclose the Peptidase C4 domain. Catalysis depends on for nuclear inclusion protein A activity residues H2095, D2130, and C2200. The RdRp catalytic domain maps to 2534 to 2658 (WIYCDADGSQ…AVHPAYESIY (125 aa)). The interval 2869–2897 (TYSHEDASPSNSNALVNTNRDRDVDAGST) is disordered. 3 positions are modified to phosphoserine: S2876, S2896, and S2913. A compositionally biased stretch (polar residues) spans 2876–2886 (SPSNSNALVNT). Phosphothreonine occurs at positions 3049 and 3108.

This sequence belongs to the potyviridae genome polyprotein family. In terms of assembly, interacts with host eIF4E protein (via cap-binding region); this interaction mediates the translation of the VPg-viral RNA conjugates. Part of a complex that comprises VPg, RNA, host EIF4E and EIF4G; this interaction mediates the translation of the VPg-viral RNA conjugates. In terms of processing, VPg is uridylylated by the polymerase and is covalently attached to the 5'-end of the genomic RNA. This uridylylated form acts as a nucleotide-peptide primer for the polymerase. Potyviral RNA is expressed as two polyproteins which undergo post-translational proteolytic processing. Genome polyprotein is processed by NIa-pro, P1 and HC-pro proteinases resulting in the production of at least ten individual proteins. P3N-PIPO polyprotein is cleaved by P1 and HC-pro proteinases resulting in the production of three individual proteins. The P1 proteinase and the HC-pro cleave only their respective C-termini autocatalytically. 6K1 is essential for proper proteolytic separation of P3 from CI.

The protein resides in the host cytoplasmic vesicle. The protein localises to the host nucleus. It localises to the virion. The catalysed reaction is RNA(n) + a ribonucleoside 5'-triphosphate = RNA(n+1) + diphosphate. It carries out the reaction Hydrolyzes glutaminyl bonds, and activity is further restricted by preferences for the amino acids in P6 - P1' that vary with the species of potyvirus, e.g. Glu-Xaa-Xaa-Tyr-Xaa-Gln-|-(Ser or Gly) for the enzyme from tobacco etch virus. The natural substrate is the viral polyprotein, but other proteins and oligopeptides containing the appropriate consensus sequence are also cleaved.. The enzyme catalyses Hydrolyzes a Gly-|-Gly bond at its own C-terminus, commonly in the sequence -Tyr-Xaa-Val-Gly-|-Gly, in the processing of the potyviral polyprotein.. Functionally, required for aphid transmission and also has proteolytic activity. Only cleaves a Gly-Gly dipeptide at its own C-terminus. Interacts with virions and aphid stylets. Acts as a suppressor of RNA-mediated gene silencing, also known as post-transcriptional gene silencing (PTGS), a mechanism of plant viral defense that limits the accumulation of viral RNAs. May have RNA-binding activity. Its function is as follows. Has helicase activity. It may be involved in replication. In terms of biological role, indispensable for virus replication. Reduces the abundance of host transcripts related to jasmonic acid biosynthesis therefore altering the host defenses. In order to increase its own stability, decreases host protein degradation pathways. Indispensable for virus replication. Functionally, mediates the cap-independent, EIF4E-dependent translation of viral genomic RNAs. Binds to the cap-binding site of host EIF4E and thus interferes with the host EIF4E-dependent mRNA export and translation. VPg-RNA directly binds EIF4E and is a template for transcription. Also forms trimeric complexes with EIF4E-EIF4G, which are templates for translation. Its function is as follows. Has RNA-binding and proteolytic activities. In terms of biological role, an RNA-dependent RNA polymerase that plays an essential role in the virus replication. Involved in aphid transmission, cell-to-cell and systemis movement, encapsidation of the viral RNA and in the regulation of viral RNA amplification. The protein is Genome polyprotein of Plum pox potyvirus (isolate NAT) (PPV).